Consider the following 1616-residue polypeptide: DNA (cytosine-5)-methyltransferase 1 (1616 aa).

Residues 1 to 120 (MPARTAPARV…NQARSEARRV (120 aa)) are interaction with DMAP1. The interval 1–148 (MPARTAPARV…RRSKSDGEAK (148 aa)) is interaction with DNMT3A. Interaction with the PRC2/EED-EZH2 complex stretches follow at residues 1 to 336 (MPAR…TEKK) and 308 to 606 (NPQI…TIRH). One can recognise a DMAP1-binding domain in the interval 16–109 (PAISLPDDVR…NREVNGRLEN (94 aa)). K70 carries the N6,N6-dimethyllysine modification. Positions 103–349 (VNGRLENGNQ…AKTVMNSKTH (247 aa)) are disordered. Phosphoserine occurs at positions 127 and 133. Residue T137 is modified to Phosphothreonine. At S141 the chain carries Phosphoserine. An N6-methyllysine; by SETD7 modification is found at K142. A Phosphoserine; by PKB/AKT1 modification is found at S143. The interaction with DNMT3B stretch occupies residues 149-217 (PEPSPSPRIT…TSRERVARPL (69 aa)). A phosphoserine mark is found at S152 and S154. An N6-acetyllysine modification is found at K160. The interaction with PCNA stretch occupies residues 163–174 (RQTTITSHFAKG). T166 is modified (phosphothreonine). Residues K173 and K188 each carry the N6-acetyllysine modification. The Nuclear localization signal signature appears at 177 to 205 (KRKPQEESERAKSDESIKEEDKDQDEKRR). Basic and acidic residues-rich tracts occupy residues 179 to 214 (KPQEESERAKSDESIKEEDKDQDEKRRRVTSRERVA), 221 to 267 (EPER…REAR), and 281 to 306 (KDEKKHRSQPKDLAAKRRPEEKEPEK). K259 carries the post-translational modification N6-acetyllysine; alternate. Residue K259 forms a Glycyl lysine isopeptide (Lys-Gly) (interchain with G-Cter in SUMO2); alternate linkage. Positions 310-502 (QISDEKDEDE…PEYAPIFGLM (193 aa)) are homodimerization. S312 is modified (phosphoserine). The segment covering 321 to 337 (EEKRRKTTPKEPTEKKM) has biased composition (basic and acidic residues). Residues 331 to 550 (EPTEKKMARA…NLNRFTEDSL (220 aa)) form a DNA replication foci-targeting sequence region. Residues C353 and C356 each contribute to the Zn(2+) site. K366 is modified (N6-acetyllysine). A phosphoserine mark is found at S394 and S398. Zn(2+) contacts are provided by C414 and H418. Residues S509 and S549 each carry the phosphoserine modification. The CXXC-type zinc finger occupies 646–692 (NAFKRRRCGVCEVCQQPECGKCKACKDMVKFGGSGRSKQACQERRCP). Residues 651–697 (RRCGVCEVCQQPECGKCKACKDMVKFGGSGRSKQACQERRCPNMAMK) are required for activity. Positions 653, 656, 659, 664, 667, 670, 686, and 691 each coordinate Zn(2+). The interval 693-754 (NMAMKEADDD…SYYKKVCIDA (62 aa)) is autoinhibitory linker. Over residues 699 to 709 (ADDDEEVDDNI) the composition is skewed to acidic residues. The segment at 699-729 (ADDDEEVDDNIPEMPSPKKMHQGKKKKQNKN) is disordered. At S714 the chain carries Phosphoserine. Basic residues predominate over residues 716 to 728 (KKMHQGKKKKQNK). Residue S732 is modified to Phosphoserine. K749 bears the N6-acetyllysine mark. The 126-residue stretch at 755 to 880 (ETLEVGDCVS…QDYARFESPP (126 aa)) folds into the BAH 1 domain. A Phosphoserine modification is found at S878. N6-acetyllysine is present on residues K891, K957, K961, K975, and K1054. In terms of domain architecture, BAH 2 spans 972 to 1100 (HYRKYSDYIK…AKSKSFEDPP (129 aa)). The segment at 1095–1130 (SFEDPPNHARSPGNKGKGKGKGKGKPKSQACEPSEP) is disordered. Repeat copies occupy residues 1109–1110 (KG), 1111–1112 (KG), 1113–1114 (KG), 1115–1116 (KG), and 1117–1118 (KG). The segment at 1109–1120 (KGKGKGKGKGKP) is 6 X 2 AA tandem repeats of K-G. Over residues 1110-1120 (GKGKGKGKGKP) the composition is skewed to basic residues. 3 positions are modified to N6-acetyllysine: K1111, K1113, and K1115. N6-acetyllysine; by EHMT2 is present on K1117. K1119 and K1121 each carry N6-acetyllysine. The stretch at 1119-1120 (KP) is one 6; approximate repeat. The interaction with the PRC2/EED-EZH2 complex stretch occupies residues 1121-1616 (KSQACEPSEP…KIKEEEAAKD (496 aa)). The region spanning 1139 to 1599 (LRTLDVFSGC…LEIKLCMLAK (461 aa)) is the SAM-dependent MTase C5-type domain. A catalytic region spans residues 1139–1616 (LRTLDVFSGC…KIKEEEAAKD (478 aa)). S-adenosyl-L-methionine is bound by residues S1146, 1150–1151 (GL), 1168–1169 (EM), 1190–1191 (DC), and C1191. C1226 is a catalytic residue. K1349 and K1415 each carry N6-acetyllysine. The S-adenosyl-L-methionine site is built by N1578 and V1580. K1609 participates in a covalent cross-link: Glycyl lysine isopeptide (Lys-Gly) (interchain with G-Cter in SUMO2).

It belongs to the class I-like SAM-binding methyltransferase superfamily. C5-methyltransferase family. Homodimer. Forms a stable complex with E2F1, BB1 and HDAC1. Forms a complex with DMAP1 and HDAC2, with direct interaction. Interacts with the PRC2/EED-EZH2 complex. Probably part of a corepressor complex containing ZNF304, TRIM28, SETDB1 and DNMT1. Interacts with UHRF1; promoting its recruitment to hemimethylated DNA. Interacts with USP7, promoting its deubiquitination. Interacts with PCNA. Interacts with MBD2 and MBD3. Interacts with DNMT3A and DNMT3B. Interacts with UBC9. Interacts with CSNK1D. Interacts with HDAC1. Interacts with BAZ2A/TIP5. Interacts with SIRT7. Interacts with ZNF263; recruited to the SIX3 promoter along with other proteins involved in chromatin modification and transcriptional corepression where it contributes to transcriptional repression. Interacts with L3MBTL3 and DCAF5; the interaction requires DNMT1 methylation at Lys-142 and is necessary to target DNMT1 for ubiquitination by the CRL4-DCAF5 E3 ubiquitin ligase complex and proteasomal degradation. Interacts with PHF20L1; the interaction requires DNMT1 methylation at Lys-142 and protects DNMT1 from ubiquitination and proteasomal degradation. In terms of processing, sumoylated; sumoylation increases activity. Acetylation on multiple lysines, mainly by KAT2B/PCAF, regulates cell cycle G(2)/M transition. Deacetylation of Lys-1349 and Lys-1415 by SIRT1 increases methyltransferase activity. Post-translationally, phosphorylation of Ser-154 by CDKs is important for enzymatic activity and protein stability. Phosphorylation of Ser-143 by AKT1 prevents methylation by SETD7 thereby increasing DNMT1 stability. In terms of processing, methylation at Lys-142 by SETD7 is necessary for the regulation of DNMT1 proteasomal degradation. Ubiquitinated by UHRF1; interaction with USP7 counteracts ubiquitination by UHRF1 by promoting deubiquitination and preventing degradation by the proteasome. As to expression, ubiquitous; highly expressed in fetal tissues, heart, kidney, placenta, peripheral blood mononuclear cells, and expressed at lower levels in spleen, lung, brain, small intestine, colon, liver, and skeletal muscle. Isoform 2 is less expressed than isoform 1.

The protein localises to the nucleus. The catalysed reaction is a 2'-deoxycytidine in DNA + S-adenosyl-L-methionine = a 5-methyl-2'-deoxycytidine in DNA + S-adenosyl-L-homocysteine + H(+). In terms of biological role, methylates CpG residues. Preferentially methylates hemimethylated DNA. Associates with DNA replication sites in S phase maintaining the methylation pattern in the newly synthesized strand, that is essential for epigenetic inheritance. Associates with chromatin during G2 and M phases to maintain DNA methylation independently of replication. It is responsible for maintaining methylation patterns established in development. DNA methylation is coordinated with methylation of histones. Mediates transcriptional repression by direct binding to HDAC2. In association with DNMT3B and via the recruitment of CTCFL/BORIS, involved in activation of BAG1 gene expression by modulating dimethylation of promoter histone H3 at H3K4 and H3K9. Probably forms a corepressor complex required for activated KRAS-mediated promoter hypermethylation and transcriptional silencing of tumor suppressor genes (TSGs) or other tumor-related genes in colorectal cancer (CRC) cells. Also required to maintain a transcriptionally repressive state of genes in undifferentiated embryonic stem cells (ESCs). Associates at promoter regions of tumor suppressor genes (TSGs) leading to their gene silencing. Promotes tumor growth. This chain is DNA (cytosine-5)-methyltransferase 1 (DNMT1), found in Homo sapiens (Human).